The primary structure comprises 610 residues: UvrABC system protein C (610 aa).

The GIY-YIG domain maps to 16-94; sequence SQPGVYRMYD…IKLYQPRYNV (79 aa). Residues 204-239 form the UVR domain; the sequence is DQVLTQLISRMETASQNLEFEEAARIRDQIQAVRRV.

It belongs to the UvrC family. In terms of assembly, interacts with UvrB in an incision complex.

Its subcellular location is the cytoplasm. In terms of biological role, the UvrABC repair system catalyzes the recognition and processing of DNA lesions. UvrC both incises the 5' and 3' sides of the lesion. The N-terminal half is responsible for the 3' incision and the C-terminal half is responsible for the 5' incision. In Escherichia coli (strain ATCC 8739 / DSM 1576 / NBRC 3972 / NCIMB 8545 / WDCM 00012 / Crooks), this protein is UvrABC system protein C.